The primary structure comprises 548 residues: Probable malate:quinone oxidoreductase (548 aa).

The segment at 522–548 (KPQAADSTPKAQLKPQPARKEVADIAL) is disordered. Basic and acidic residues predominate over residues 539–548 (ARKEVADIAL).

This sequence belongs to the MQO family. The cofactor is FAD.

It carries out the reaction (S)-malate + a quinone = a quinol + oxaloacetate. It participates in carbohydrate metabolism; tricarboxylic acid cycle; oxaloacetate from (S)-malate (quinone route): step 1/1. The protein is Probable malate:quinone oxidoreductase of Escherichia fergusonii (strain ATCC 35469 / DSM 13698 / CCUG 18766 / IAM 14443 / JCM 21226 / LMG 7866 / NBRC 102419 / NCTC 12128 / CDC 0568-73).